We begin with the raw amino-acid sequence, 472 residues long: Glycine--tRNA ligase (472 aa).

Arg-109 and Glu-174 together coordinate substrate. Residues 206–208, 216–221, 293–294, and 337–340 each bind ATP; these read RNE, FRTREF, EL, and GLTR. 221–225 contributes to the substrate binding site; it reads FEQME. Residue 333 to 337 coordinates substrate; the sequence is EPAAG.

This sequence belongs to the class-II aminoacyl-tRNA synthetase family. In terms of assembly, homodimer.

It localises to the cytoplasm. It carries out the reaction tRNA(Gly) + glycine + ATP = glycyl-tRNA(Gly) + AMP + diphosphate. Catalyzes the attachment of glycine to tRNA(Gly). The sequence is that of Glycine--tRNA ligase from Cutibacterium acnes (strain DSM 16379 / KPA171202) (Propionibacterium acnes).